A 220-amino-acid polypeptide reads, in one-letter code: 26S proteasome non-ATPase regulatory subunit 9 (220 aa).

2 coiled-coil regions span residues Gly4–Leu32 and Arg61–Glu91. The PDZ domain occupies Arg102–Thr200.

The protein belongs to the proteasome subunit p27 family. As to quaternary structure, interacts with PI31; this interaction is increased by PI31 ADP-ribosylation. Interacts with Rpt5.

Its function is as follows. Acts as a chaperone during the assembly of the 26S proteasome, specifically of the base subcomplex of the PA700/19S regulatory complex (RC). The chain is 26S proteasome non-ATPase regulatory subunit 9 from Drosophila melanogaster (Fruit fly).